Here is a 406-residue protein sequence, read N- to C-terminus: tRNA-specific 2-thiouridylase MnmA (406 aa).

Residues 6 to 13 (AMSGGVDS) and leucine 32 contribute to the ATP site. Cysteine 101 functions as the Nucleophile in the catalytic mechanism. Cysteine 101 and cysteine 193 form a disulfide bridge. Glycine 125 is a binding site for ATP. The segment at 143–145 (KDQ) is interaction with tRNA. Cysteine 193 (cysteine persulfide intermediate) is an active-site residue. Residues 378–406 (GAPIEEQPAPGTVGAVDADAIEQGEDAQR) are disordered. Acidic residues predominate over residues 396–406 (DAIEQGEDAQR).

This sequence belongs to the MnmA/TRMU family.

Its subcellular location is the cytoplasm. The catalysed reaction is S-sulfanyl-L-cysteinyl-[protein] + uridine(34) in tRNA + AH2 + ATP = 2-thiouridine(34) in tRNA + L-cysteinyl-[protein] + A + AMP + diphosphate + H(+). Functionally, catalyzes the 2-thiolation of uridine at the wobble position (U34) of tRNA, leading to the formation of s(2)U34. This Corynebacterium urealyticum (strain ATCC 43042 / DSM 7109) protein is tRNA-specific 2-thiouridylase MnmA.